A 342-amino-acid polypeptide reads, in one-letter code: Transmembrane protein 268 (342 aa).

The segment at 1–30 (MACEPQVDPGATGPLPPSSPGWSALPGGSP) is disordered. A run of 2 helical transmembrane segments spans residues 105–125 (AFAV…SQMF) and 132–152 (AGML…VLVF).

As to quaternary structure, interacts with ITGAM; this interaction inhibits ITGAM degradation via the endosome-lysosome pathway. Interacts with ITGB4; this interaction prevents ITGB4 degradation.

The protein localises to the cell membrane. In terms of biological role, stabilizes cell surface expression of ITGAM and participates in the adhesion and migration of phagocytes during bacterial clearance. The protein is Transmembrane protein 268 of Homo sapiens (Human).